The following is a 683-amino-acid chain: Bifunctional lysine-specific demethylase and histidyl-hydroxylase NO66 (683 aa).

Residues 1 to 26 (MHKASTSSANRANFQGNHKTQKSPNN) show a composition bias toward polar residues. 2 disordered regions span residues 1–162 (MHKA…SPIQ) and 179–208 (AAGA…AAKS). Positions 54–65 (LTKEQKERRKMM) are enriched in basic and acidic residues. Over residues 85-94 (IDTSASTSNK) the composition is skewed to polar residues. The segment covering 95-108 (GKSKAARPTDRKRR) has biased composition (basic residues). Positions 116-125 (PADANNNNTK) are enriched in low complexity. Phosphoserine is present on serine 152. Threonine 158 carries the post-translational modification Phosphothreonine. Serine 159 bears the Phosphoserine mark. The span at 179–189 (AAGASGASGPA) shows a compositional bias: low complexity. The 140-residue stretch at 341–480 (NPSTYLVGLR…NLLEKLMPIV (140 aa)) folds into the JmjC domain. Residues histidine 381, aspartate 383, and histidine 446 each coordinate Fe cation.

The protein belongs to the ROX family. NO66 subfamily. Fe(2+) serves as cofactor.

It localises to the nucleus. It carries out the reaction N(6),N(6)-dimethyl-L-lysyl(36)-[histone H3] + 2 2-oxoglutarate + 2 O2 = L-lysyl(36)-[histone H3] + 2 formaldehyde + 2 succinate + 2 CO2. In terms of biological role, oxygenase that can act as both a histone lysine demethylase and a ribosomal histidine hydroxylase. Specifically demethylates 'Lys-4' (H3K4me) and 'Lys-36' (H3K36me) of histone H3, thereby playing a central role in histone code. In Drosophila yakuba (Fruit fly), this protein is Bifunctional lysine-specific demethylase and histidyl-hydroxylase NO66.